Reading from the N-terminus, the 250-residue chain is tRNA (guanine-N(1)-)-methyltransferase (250 aa).

Residues Gly-116 and Ile-136 to Leu-141 each bind S-adenosyl-L-methionine.

This sequence belongs to the RNA methyltransferase TrmD family. Homodimer.

It localises to the cytoplasm. The catalysed reaction is guanosine(37) in tRNA + S-adenosyl-L-methionine = N(1)-methylguanosine(37) in tRNA + S-adenosyl-L-homocysteine + H(+). Functionally, specifically methylates guanosine-37 in various tRNAs. In Pseudomonas putida (strain ATCC 47054 / DSM 6125 / CFBP 8728 / NCIMB 11950 / KT2440), this protein is tRNA (guanine-N(1)-)-methyltransferase.